Consider the following 346-residue polypeptide: Methylthioribose-1-phosphate isomerase (346 aa).

Residues 46–48 (RGA), Arg-89, and Gln-196 each bind substrate. The active-site Proton donor is the Asp-237. 247–248 (NK) contacts substrate.

This sequence belongs to the eIF-2B alpha/beta/delta subunits family. MtnA subfamily.

It carries out the reaction 5-(methylsulfanyl)-alpha-D-ribose 1-phosphate = 5-(methylsulfanyl)-D-ribulose 1-phosphate. The protein operates within amino-acid biosynthesis; L-methionine biosynthesis via salvage pathway; L-methionine from S-methyl-5-thio-alpha-D-ribose 1-phosphate: step 1/6. Catalyzes the interconversion of methylthioribose-1-phosphate (MTR-1-P) into methylthioribulose-1-phosphate (MTRu-1-P). This chain is Methylthioribose-1-phosphate isomerase, found in Geotalea daltonii (strain DSM 22248 / JCM 15807 / FRC-32) (Geobacter daltonii).